The following is a 42-amino-acid chain: TKYYGNGVYCNSKKCWVDWGQAAGGIGQTVVXGWLGGAIPGK.

A disulfide bond links Cys10 and Cys15.

It belongs to the bacteriocin class IIA/YGNGV family.

It is found in the secreted. In terms of biological role, has antimicrobial activity. In Latilactobacillus sakei (Lactobacillus sakei), this protein is Bacteriocin bavaricin-MN.